Here is a 347-residue protein sequence, read N- to C-terminus: MKPIILMFIMLTIFMGTMLTMISSHWLLMWVGLEINMLAIIPILMKKISPRSTEAATKYFLTQATASMLLMFSIVINTANSGQWGITNMHNQLTSLVTMAALMMKLGMTPFHFWVPEVTQGISLMSGMLLLTWQKLAPISILLQIFPSMNPNIILLIAILSILVGGWGGLNQTQLRKILAYSSIAHMGWMMAILMYWPSLTMLNLLIYLMLTITLFSVLNINTNTTTLTLSNTWNKTPMITLTILISLLSLGGLPPLTGFLPKWTIIQELTKNSNIMLATIMAIMALLNLYFYMRLIYSTSLTMFPTLNNMKMKWQFQQTKQIFLLSPLVILATLTLPLSPALLTLN.

10 helical membrane-spanning segments follow: residues P3 to S23, H25 to M45, Y59 to A79, L96 to P116, G127 to P147, N150 to L170, I193 to I213, I240 to F260, S274 to M294, and I323 to L343.

It belongs to the complex I subunit 2 family. As to quaternary structure, core subunit of respiratory chain NADH dehydrogenase (Complex I) which is composed of 45 different subunits. Interacts with TMEM242.

The protein resides in the mitochondrion inner membrane. It carries out the reaction a ubiquinone + NADH + 5 H(+)(in) = a ubiquinol + NAD(+) + 4 H(+)(out). Its function is as follows. Core subunit of the mitochondrial membrane respiratory chain NADH dehydrogenase (Complex I) which catalyzes electron transfer from NADH through the respiratory chain, using ubiquinone as an electron acceptor. Essential for the catalytic activity and assembly of complex I. In Lemur catta (Ring-tailed lemur), this protein is NADH-ubiquinone oxidoreductase chain 2.